Consider the following 198-residue polypeptide: MDAILNYRPEGSEDYYTLLGCDELSSVEQILAEFKVRALECHPDKHPENSKAVETFQKLQKAKEILSNAESRARYDHWRRSQMSMSFEQWEALADSVKTSMHWAVRSKKDLMLEGSEQTYTNTAQNKERSEQRETKQGDPDSTPEKMMQKESESPEKGISPQNPDSPGLSDWNCGHLHFRWSGDTPSELLRKFRNYEI.

Position 1 is an N-acetylmethionine (methionine 1). Positions aspartate 14–arginine 79 constitute a J domain. The segment at threonine 121–glycine 183 is disordered. The span at asparagine 126–glutamate 156 shows a compositional bias: basic and acidic residues. Phosphoserine is present on residues serine 160, serine 166, and serine 182.

In terms of assembly, interacts with HSPA8. Interacts with TPH1. Interacts with TPH2.

It is found in the cytoplasm. In terms of biological role, probable co-chaperone that participates in the proper folding of biopterin-dependent aromatic amino acid hydroxylases, which include phenylalanine-4-hydroxylase (PAH), tyrosine 3-monooxygenase (TH) and peripheral and neuronal tryptophan hydroxylases (TPH1 and TPH2). This is DnaJ homolog subfamily C member 12 (Dnajc12) from Rattus norvegicus (Rat).